The chain runs to 1017 residues: Voltage-gated delayed rectifier potassium channel KCNH4 (1017 aa).

Residues 1–232 are Cytoplasmic-facing; that stretch reads MPVMKGLLAP…YSIPKAVWDG (232 aa). The region spanning 14-90 is the PAS domain; that stretch reads FLDTIATRFD…QRLQKALEGH (77 aa). A PAC domain is found at 93 to 145; it reads HRAEICFYRKDGSAFWCLLDMMPIKNELGEVVLFLFSFKDISQSGGPGLGSPG. The segment at 139–170 is disordered; sequence PGLGSPGIHGDNNNHENSLGRRGASSRLRSTR. The chain crosses the membrane as a helical span at residues 233–253; it reads LILLATFYVAVTVPYNVCFAG. Topologically, residues 254–262 are extracellular; the sequence is DDDTPITSR. The chain crosses the membrane as a helical span at residues 263 to 283; the sequence is HTLVSDIAVEMLFILDIILNF. At 284–305 the chain is on the cytoplasmic side; sequence RTTYVSQSGQVVSAPRSIGLHY. A helical membrane pass occupies residues 306 to 326; it reads LATWFFVDLIAALPFDLLYVF. The Extracellular portion of the chain corresponds to 327-334; sequence NITVTSLV. Residues 335–355 form a helical; Voltage-sensor membrane-spanning segment; that stretch reads HLLKTVRLLRLLRLLQKLERY. Residues 356-364 are Cytoplasmic-facing; it reads SQCSAVVLT. Residues 365 to 385 form a helical membrane-spanning segment; the sequence is LLMSVFALLAHWMACVWYVIG. At 386 to 427 the chain is on the extracellular side; the sequence is RREMEANDPLLWDIGWLHELGKRLEEPYVNGSAGGPSRRSAY. Residue N415 is glycosylated (N-linked (GlcNAc...) asparagine). An intramembrane region (pore-forming) is located at residues 428-448; that stretch reads IAALYFTLSSLTSVGFGNVCA. The Selectivity filter motif lies at 440-445; sequence SVGFGN. The Extracellular segment spans residues 449-454; the sequence is NTDAEK. The chain crosses the membrane as a helical span at residues 455–475; sequence IFSICTMLIGALMHAVVFGNV. Residues 476–1017 are Cytoplasmic-facing; it reads TAIIQRMYSR…SFQSGSDTFH (542 aa). A cNMP-binding domain region spans residues 557–621; that stretch reads LFGAASRGCL…AILGKGDLIG (65 aa). Disordered regions lie at residues 690-749 and 771-870; these read GSEN…PNLS and LVSS…ELAT. The span at 703–726 shows a compositional bias: polar residues; that stretch reads PRLSQARSDTLGSSSDKTLPSITE. Composition is skewed to low complexity over residues 771-786 and 806-820; these read LVSS…PALA and PPQL…FGPP. The stretch at 873-907 forms a coiled coil; it reads AEEVKEKVCRLNQEISRLNQEVSQLSRELRQVMGL. A disordered region spans residues 972–1017; it reads SELRSSMVPPFPSEPDPLGPSPVPEASPLTPSLLKHSFQSGSDTFH. Over residues 980 to 996 the composition is skewed to pro residues; that stretch reads PPFPSEPDPLGPSPVPE. Polar residues predominate over residues 1008–1017; the sequence is SFQSGSDTFH.

The protein belongs to the potassium channel family. H (Eag) (TC 1.A.1.20) subfamily. Kv12.3/KCNH4 sub-subfamily. The potassium channel is probably composed of a homo- or heterotetrameric complex of pore-forming alpha subunits that can associate with modulating beta subunits. In terms of tissue distribution, highly expressed in adult testis, and in adult and embryonic brain. In adult brain found in piriform cortex, olfactory tubercle, cerebral cortex, hippocampus pyramidial cells and dentate gyrus and basal ganglia of caudate/putamen and accumbens nucleus. Detected at intermediate levels in lung, spinal cord, and pituitary.

Its subcellular location is the membrane. The catalysed reaction is K(+)(in) = K(+)(out). In terms of biological role, pore-forming (alpha) subunit of a voltage-gated delayed rectifier. Activates at more negative voltages, exhibits fast prepulse-independent activation kinetics and deactivates much more slowly, but shows no inactivation. The protein is Voltage-gated delayed rectifier potassium channel KCNH4 of Rattus norvegicus (Rat).